Consider the following 224-residue polypeptide: dTTP/UTP pyrophosphatase (224 aa).

Asp77 functions as the Proton acceptor in the catalytic mechanism.

Belongs to the Maf family. YhdE subfamily. Requires a divalent metal cation as cofactor.

Its subcellular location is the cytoplasm. It catalyses the reaction dTTP + H2O = dTMP + diphosphate + H(+). The catalysed reaction is UTP + H2O = UMP + diphosphate + H(+). Its function is as follows. Nucleoside triphosphate pyrophosphatase that hydrolyzes dTTP and UTP. May have a dual role in cell division arrest and in preventing the incorporation of modified nucleotides into cellular nucleic acids. This is dTTP/UTP pyrophosphatase from Dehalococcoides mccartyi (strain ATCC BAA-2100 / JCM 16839 / KCTC 5957 / BAV1).